A 113-amino-acid chain; its full sequence is UPF0122 protein SSU98_0878 (113 aa).

It belongs to the UPF0122 family.

In terms of biological role, might take part in the signal recognition particle (SRP) pathway. This is inferred from the conservation of its genetic proximity to ftsY/ffh. May be a regulatory protein. This chain is UPF0122 protein SSU98_0878, found in Streptococcus suis (strain 98HAH33).